The chain runs to 548 residues: Aromatic ammonia-lyase (548 aa).

Catalysis depends on Tyr-55, which acts as the Proton donor/acceptor. Positions 144–146 (ASG) form a cross-link, 5-imidazolinone (Ala-Gly). Ser-145 is modified (2,3-didehydroalanine (Ser)). Asn-200, Gln-288, Arg-294, Asn-324, Lys-396, Glu-425, and Asn-428 together coordinate (E)-cinnamate.

The protein belongs to the PAL/histidase family. As to quaternary structure, homotetramer. In terms of processing, contains an active site 4-methylidene-imidazol-5-one (MIO), which is formed autocatalytically by cyclization and dehydration of residues Ala-Ser-Gly.

The catalysed reaction is L-phenylalanine = (E)-cinnamate + NH4(+). It catalyses the reaction L-tyrosine = (E)-4-coumarate + NH4(+). The enzyme catalyses 3,4-dimethoxy-L-phenylalanine = 3,4-dimethoxy-(E)-cinnamate + NH4(+). It functions in the pathway phenylpropanoid metabolism; trans-cinnamate biosynthesis; trans-cinnamate from L-phenylalanine: step 1/1. In terms of biological role, aromatic ammonia-lyase (AAL) that shows reduced activity to catalyze the non-oxidative ammonia elimination from the canonical AAL substrates L-Phe and L-Tyr, contrasted by its pronounced efficiency towards substrates with electron-donor aromatic substituents such as 3,4-dimethoxy-L-phenylalanine. Is also able to catalyze the reverse reaction in vitro, i.e. the ammonia addition reaction to cinnamate derivatives, producing enantiopure phenylalanine derivatives. Shows no activity with L-His. The sequence is that of Aromatic ammonia-lyase from Loktanella atrilutea.